A 343-amino-acid chain; its full sequence is MSAFTPASEVLLRHSDDLEQSRILFAGDLQDDLPARLDTAASRAHTQQFHHWQVLSCQMGDNARFSLVATANDVADCDTLIYYWPKNKPEAQFQLMNLLSLLPVGTDIFVVGENRSGVRSAEQMLADYAPLNKVDSARRCGLYFGRLEKQPVFDADKFWGEYSVDGLTVKTLPGVFSRDGLDVGSQLLLSTLTPHTKGKVLDVGCGAGVLSVAFARHSPKIRLTLCDVSAPAVEASRATLAANGVESEVFASNVFSEVKGCFDMIISNPPFHDGMQTSLDAAQTLIRGAVRHLNSGGELRIVANAFLPYPDVLDETFGFHEVIAQTGRFKVYRAIMTRQAKKG.

Belongs to the methyltransferase superfamily. RsmC family. Monomer.

The protein localises to the cytoplasm. The enzyme catalyses guanosine(1207) in 16S rRNA + S-adenosyl-L-methionine = N(2)-methylguanosine(1207) in 16S rRNA + S-adenosyl-L-homocysteine + H(+). Specifically methylates the guanine in position 1207 of 16S rRNA in the 30S particle. The chain is Ribosomal RNA small subunit methyltransferase C from Shigella flexneri serotype 5b (strain 8401).